Reading from the N-terminus, the 698-residue chain is Polyribonucleotide nucleotidyltransferase (698 aa).

Mg(2+) contacts are provided by Asp490 and Asp496. The 60-residue stretch at 557-616 folds into the KH domain; that stretch reads PKVVTMTIKPDKIRDVIGPGGKKINEIIDETGVKLDIEQDGTIFIGAVDQAMINRAREII. The 69-residue stretch at 626–694 folds into the S1 motif domain; sequence GQTYQATVKR…KQGRVNASHR (69 aa).

This sequence belongs to the polyribonucleotide nucleotidyltransferase family. Requires Mg(2+) as cofactor.

The protein localises to the cytoplasm. The catalysed reaction is RNA(n+1) + phosphate = RNA(n) + a ribonucleoside 5'-diphosphate. In terms of biological role, involved in mRNA degradation. Catalyzes the phosphorolysis of single-stranded polyribonucleotides processively in the 3'- to 5'-direction. The polypeptide is Polyribonucleotide nucleotidyltransferase (Staphylococcus aureus (strain MRSA252)).